Here is a 77-residue protein sequence, read N- to C-terminus: uncharacterized protein (77 aa).

A helical transmembrane segment spans residues 49–71; sequence LVIASLILAIILLGILYYISYQM.

The protein resides in the membrane. This is an uncharacterized protein from Archaeoglobus fulgidus (strain ATCC 49558 / DSM 4304 / JCM 9628 / NBRC 100126 / VC-16).